The primary structure comprises 66 residues: Beta-toxin Cb2 (66 aa).

One can recognise an LCN-type CS-alpha/beta domain in the interval lysine 1–lysine 66. Intrachain disulfides connect cysteine 12-cysteine 65, cysteine 16-cysteine 41, cysteine 25-cysteine 46, and cysteine 29-cysteine 48.

The protein belongs to the long (4 C-C) scorpion toxin superfamily. Sodium channel inhibitor family. Beta subfamily. In terms of tissue distribution, expressed by the venom gland.

It is found in the secreted. Functionally, beta toxins bind voltage-independently at site-4 of sodium channels (Nav) and reduces peak current and shifts the voltage of activation toward more negative potentials thereby affecting sodium channel activation and promoting spontaneous and repetitive firing. Has an inhibitory effect on voltage-gated sodium channel hNav1.6/SCN8A, affecting both the activation and inactivation processes. Also reduces the peak current of hNav1.5/SCN5A but does not shift its voltage of activation. This toxin is active against mammals and lethal to mice. The chain is Beta-toxin Cb2 from Centruroides baergi (Scorpion).